A 125-amino-acid polypeptide reads, in one-letter code: Glycine cleavage system H protein (125 aa).

The Lipoyl-binding domain occupies 19–101 (VGTVGISDYA…EGAAWFFKLT (83 aa)). N6-lipoyllysine is present on lysine 60.

The protein belongs to the GcvH family. The glycine cleavage system is composed of four proteins: P, T, L and H. (R)-lipoate serves as cofactor.

Functionally, the glycine cleavage system catalyzes the degradation of glycine. The H protein shuttles the methylamine group of glycine from the P protein to the T protein. The protein is Glycine cleavage system H protein of Paramagnetospirillum magneticum (strain ATCC 700264 / AMB-1) (Magnetospirillum magneticum).